Consider the following 134-residue polypeptide: Large ribosomal subunit protein eL32 (134 aa).

The protein belongs to the eukaryotic ribosomal protein eL32 family.

The protein is Large ribosomal subunit protein eL32 (RPL32) of Tetrahymena thermophila (strain SB210).